The primary structure comprises 204 residues: Holliday junction branch migration complex subunit RuvA (204 aa).

The interval 1–64 is domain I; sequence MIARLRGTLL…EDGQTLFGFR (64 aa). The tract at residues 65–143 is domain II; it reads TRAERDLFRR…GVGGGSTAAP (79 aa). The tract at residues 144-153 is flexible linker; sequence AAGADHPTGE. The tract at residues 153–204 is domain III; the sequence is ENDPVSEAIEGLVALGYKPPEAARMARNAAEPELGCEAIIRRALQRAVPRGG.

It belongs to the RuvA family. Homotetramer. Forms an RuvA(8)-RuvB(12)-Holliday junction (HJ) complex. HJ DNA is sandwiched between 2 RuvA tetramers; dsDNA enters through RuvA and exits via RuvB. An RuvB hexamer assembles on each DNA strand where it exits the tetramer. Each RuvB hexamer is contacted by two RuvA subunits (via domain III) on 2 adjacent RuvB subunits; this complex drives branch migration. In the full resolvosome a probable DNA-RuvA(4)-RuvB(12)-RuvC(2) complex forms which resolves the HJ.

Its subcellular location is the cytoplasm. Functionally, the RuvA-RuvB-RuvC complex processes Holliday junction (HJ) DNA during genetic recombination and DNA repair, while the RuvA-RuvB complex plays an important role in the rescue of blocked DNA replication forks via replication fork reversal (RFR). RuvA specifically binds to HJ cruciform DNA, conferring on it an open structure. The RuvB hexamer acts as an ATP-dependent pump, pulling dsDNA into and through the RuvAB complex. HJ branch migration allows RuvC to scan DNA until it finds its consensus sequence, where it cleaves and resolves the cruciform DNA. The sequence is that of Holliday junction branch migration complex subunit RuvA from Halorhodospira halophila (strain DSM 244 / SL1) (Ectothiorhodospira halophila (strain DSM 244 / SL1)).